A 358-amino-acid chain; its full sequence is MRKTVIVAMSGGVDSSVVAYLLKKQGEYNVVGLFMKNWGEQDENGECTATKDFRDVERIAEQLSIPYYTVSFSKEYKERVFSRFLREYANGYTPNPDVLCNREIKFDLLQKKVRELKGDFLATGHYCRGGADGTGLSRGIDPNKDQSYFLCGTPKDALSNVLFPLGGMYKTEVRRIAQEAGLATATKKDSTGICFIGKRPFKSFLEQFVADSPGDIIDFDTQQVVGRHEGAHYYTIGQRRGLNIGGMEKPCYVLSKNMEKNIVYIVRGEDHPLLYRQELLAKELNWFVPLQEPMICSAKVRYRSPDEKCSVYPLEDGTVKVIFDVPVKAVTPGQTVAFYQGDICLGGGVIEVPMIHQL.

ATP contacts are provided by residues 8–15 and Met35; that span reads AMSGGVDS. Positions 95–97 are interaction with target base in tRNA; the sequence is NPD. The Nucleophile role is filled by Cys100. Cys100 and Cys194 are oxidised to a cystine. Gly124 contacts ATP. The segment at 144–146 is interaction with tRNA; that stretch reads KDQ. The Cysteine persulfide intermediate role is filled by Cys194. The tract at residues 301–302 is interaction with tRNA; it reads RY.

This sequence belongs to the MnmA/TRMU family.

Its subcellular location is the cytoplasm. It catalyses the reaction S-sulfanyl-L-cysteinyl-[protein] + uridine(34) in tRNA + AH2 + ATP = 2-thiouridine(34) in tRNA + L-cysteinyl-[protein] + A + AMP + diphosphate + H(+). Functionally, catalyzes the 2-thiolation of uridine at the wobble position (U34) of tRNA, leading to the formation of s(2)U34. The chain is tRNA-specific 2-thiouridylase MnmA from Chlamydia trachomatis serovar D (strain ATCC VR-885 / DSM 19411 / UW-3/Cx).